The sequence spans 338 residues: Tryptophan--tRNA ligase (338 aa).

ATP-binding positions include 11 to 13 and 19 to 20; these read QPS and GN. Positions 12 to 20 match the 'HIGH' region motif; it reads PSGELSIGN. Asp135 is a binding site for L-tryptophan. ATP-binding positions include 147-149, Val189, and 198-202; these read GSD and KMSKS. Residues 198–202 carry the 'KMSKS' region motif; the sequence is KMSKS.

It belongs to the class-I aminoacyl-tRNA synthetase family. In terms of assembly, homodimer.

The protein localises to the cytoplasm. The enzyme catalyses tRNA(Trp) + L-tryptophan + ATP = L-tryptophyl-tRNA(Trp) + AMP + diphosphate + H(+). Functionally, catalyzes the attachment of tryptophan to tRNA(Trp). The chain is Tryptophan--tRNA ligase from Vibrio vulnificus (strain CMCP6).